The following is a 181-amino-acid chain: Ribulose bisphosphate carboxylase small subunit, chloroplastic 1 (181 aa).

The N-terminal 57 residues, 1–57 (MASSIVSSAAVATRSNVAQASMVAPFTGLKSAASFPVTKKNNNVDITSLASNGGRVR), are a transit peptide targeting the chloroplast.

This sequence belongs to the RuBisCO small chain family. In terms of assembly, heterohexadecamer of 8 large and 8 small subunits.

It is found in the plastid. Its subcellular location is the chloroplast. RuBisCO catalyzes two reactions: the carboxylation of D-ribulose 1,5-bisphosphate, the primary event in carbon dioxide fixation, as well as the oxidative fragmentation of the pentose substrate. Both reactions occur simultaneously and in competition at the same active site. Although the small subunit is not catalytic it is essential for maximal activity. This is Ribulose bisphosphate carboxylase small subunit, chloroplastic 1 from Solanum tuberosum (Potato).